The sequence spans 183 residues: Protein jagunal homolog 1 (183 aa).

Over 1-39 (MASRAGPRAAGTDGSDFQHRERVAMHYQMSVTLKYEIKK) the chain is Cytoplasmic. Position 3 is a phosphoserine (S3). Residues 40–60 (LIYVHLVIWLLLVAKMSVGHL) form a helical membrane-spanning segment. Residues 61-71 (RLLSHDQVAMP) lie on the Lumenal side of the membrane. Residues 72–92 (YQWEYPYLLSILPSLLGLLSF) traverse the membrane as a helical segment. Over 93–96 (PRNN) the chain is Cytoplasmic. The helical transmembrane segment at 97–117 (ISYLVLSMISMGLFSIAPLIY) threads the bilayer. Residues 118–137 (GSMEMFPAAQQLYRHGKAYR) lie on the Lumenal side of the membrane. Residues 138–158 (FLFGFSAVSIMYLVLVLAVQV) form a helical membrane-spanning segment. Topologically, residues 159 to 183 (HAWQLYYSKKLLDSWFTSTQEKKHK) are cytoplasmic.

This sequence belongs to the jagunal family. In terms of assembly, interacts with COPA, COPB2 and COPG2. Ubiquitously expressed.

It is found in the endoplasmic reticulum membrane. Its function is as follows. Endoplasmic reticulum transmembrane protein involved in vesicle-mediated transport, which is required for neutrophil function. Required for vesicle-mediated transport; it is however unclear whether it is involved in early secretory pathway or intracellular protein transport. Acts as a regulator of neutrophil function, probably via its role in vesicle-mediated transport: required for defense against fungal pathogens and for granulocyte colony-stimulating factor (GM-CSF) signaling pathway; possibly by regulating glycosylation and/or targeting of proteins contributing to the viability and migration of neutrophils. The protein is Protein jagunal homolog 1 of Homo sapiens (Human).